The sequence spans 208 residues: Small ribosomal subunit protein uS4 (208 aa).

In terms of domain architecture, S4 RNA-binding spans 98 to 158 (RRLDNVVYRL…EKSRGQLRIK (61 aa)).

Belongs to the universal ribosomal protein uS4 family. As to quaternary structure, part of the 30S ribosomal subunit. Contacts protein S5. The interaction surface between S4 and S5 is involved in control of translational fidelity.

Its function is as follows. One of the primary rRNA binding proteins, it binds directly to 16S rRNA where it nucleates assembly of the body of the 30S subunit. With S5 and S12 plays an important role in translational accuracy. The protein is Small ribosomal subunit protein uS4 of Magnetococcus marinus (strain ATCC BAA-1437 / JCM 17883 / MC-1).